Reading from the N-terminus, the 470-residue chain is Ubiquitin carboxyl-terminal hydrolase calypso (470 aa).

A UCH catalytic domain is found at 11-241 (GWLELESDPG…ITHKLKMLRT (231 aa)). Residue Cys98 is the Nucleophile of the active site. The Proton donor role is filled by His177. Residues 260–280 (ESRSQAEIRETVDKIKKEEQE) are a coiled coil. Positions 392–420 (NYDEFICTFLSMLAYQGELGDLVTQHLVT) constitute a ULD domain. A positively charged C-terminal tail required for binding nucleosomes region spans residues 422-470 (RKPSLGGVQNSGSRGVVRNYNKKSTTNGSSPKTPSSKRRRGRTKYRKRK). Residues 423–434 (KPSLGGVQNSGS) are compositionally biased toward polar residues. Residues 423–470 (KPSLGGVQNSGSRGVVRNYNKKSTTNGSSPKTPSSKRRRGRTKYRKRK) are disordered. Over residues 456-470 (SSKRRRGRTKYRKRK) the composition is skewed to basic residues.

Belongs to the peptidase C12 family. BAP1 subfamily. As to quaternary structure, catalytic component of the polycomb repressive deubiquitinase (PR-DUB) complex, at least composed of caly/calypso, Asx and sba (MBD5/6 homolog). The PR-DUB complex associates with nucleosomes to mediate deubiquitination of histone H2AK118ub1 substrates; the association requires the positively charged C-terminal tail of caly, probably due to direct binding of DNA. Interacts (via ULD domain) with Asx (via DEUBAD domain); the interaction produces a stable heterodimer with a composite binding site for ubiquitin. Homodimerizes (via coiled-coil hinge-region between the UCH and ULD domains) to mediate assembly of 2 copies of the caly-Asx heterodimer into a bisymmetric tetramer; dimerization enhances PR-DUB association with nucleosomes.

Its subcellular location is the nucleus. It carries out the reaction Thiol-dependent hydrolysis of ester, thioester, amide, peptide and isopeptide bonds formed by the C-terminal Gly of ubiquitin (a 76-residue protein attached to proteins as an intracellular targeting signal).. Functionally, catalytic component of the polycomb repressive deubiquitinase (PR-DUB) complex, a complex that specifically mediates deubiquitination of histone H2A monoubiquitinated at 'Lys-119' (H2AK118ub1). Mediates bisymmetric organization of the PR-DUB complex and is involved in association with nucleosomes to mediate deubiquitination. Does not deubiquitinate monoubiquitinated histone H2B. Required to maintain the transcriptionally repressive state of homeotic genes throughout development. The PR-DUB complex has weak or no activity toward 'Lys-48'- and 'Lys-63'-linked polyubiquitin chains. Polycomb group (PcG) protein. The sequence is that of Ubiquitin carboxyl-terminal hydrolase calypso from Culex quinquefasciatus (Southern house mosquito).